The primary structure comprises 479 residues: Ribosomal RNA small subunit methyltransferase F (479 aa).

S-adenosyl-L-methionine contacts are provided by residues 125-131 (AAAPGSK), Glu149, Asp176, and Asp194. Cys247 serves as the catalytic Nucleophile.

This sequence belongs to the class I-like SAM-binding methyltransferase superfamily. RsmB/NOP family.

It is found in the cytoplasm. It catalyses the reaction cytidine(1407) in 16S rRNA + S-adenosyl-L-methionine = 5-methylcytidine(1407) in 16S rRNA + S-adenosyl-L-homocysteine + H(+). Functionally, specifically methylates the cytosine at position 1407 (m5C1407) of 16S rRNA. In Escherichia coli O7:K1 (strain IAI39 / ExPEC), this protein is Ribosomal RNA small subunit methyltransferase F.